We begin with the raw amino-acid sequence, 138 residues long: Gap junction alpha-4 protein (138 aa).

Over 1–16 (DWGFLEKLLDQVQEHS) the chain is Cytoplasmic. Residues 17–39 (TVVGKIWLTVLFIFRILILGLAG) traverse the membrane as a helical segment. Residues 40–74 (ESVWGDEQSDFECNTAQPGCTNVCYDQAFPISHIP) are Extracellular-facing. A helical transmembrane segment spans residues 75–97 (YWVLQFLFVSTPTLVYLGHVIYL). The Cytoplasmic segment spans residues 98–138 (SRREERLRQKEGELRALPDKDPRVERALAGIERQMAKISVA).

The protein belongs to the connexin family. Alpha-type (group II) subfamily. As to quaternary structure, a connexon is composed of a hexamer of connexins.

Its subcellular location is the cell membrane. It localises to the cell junction. The protein resides in the gap junction. One gap junction consists of a cluster of closely packed pairs of transmembrane channels, the connexons, through which materials of low MW diffuse from one cell to a neighboring cell. The protein is Gap junction alpha-4 protein (GJA4) of Sus scrofa (Pig).